Here is a 364-residue protein sequence, read N- to C-terminus: tRNA-specific 2-thiouridylase MnmA (364 aa).

Residues 12–19 and Met-38 contribute to the ATP site; that span reads GISGGVDS. Positions 98–100 are interaction with target base in tRNA; it reads NPD. Cys-103 acts as the Nucleophile in catalysis. A disulfide bridge links Cys-103 with Cys-199. Gly-127 is an ATP binding site. Positions 149–151 are interaction with tRNA; sequence KEQ. Residue Cys-199 is the Cysteine persulfide intermediate of the active site. The interaction with tRNA stretch occupies residues 311–312; the sequence is RY.

The protein belongs to the MnmA/TRMU family.

Its subcellular location is the cytoplasm. It carries out the reaction S-sulfanyl-L-cysteinyl-[protein] + uridine(34) in tRNA + AH2 + ATP = 2-thiouridine(34) in tRNA + L-cysteinyl-[protein] + A + AMP + diphosphate + H(+). Functionally, catalyzes the 2-thiolation of uridine at the wobble position (U34) of tRNA, leading to the formation of s(2)U34. The sequence is that of tRNA-specific 2-thiouridylase MnmA from Hahella chejuensis (strain KCTC 2396).